The primary structure comprises 160 residues: NADH-quinone oxidoreductase subunit I (160 aa).

2 4Fe-4S ferredoxin-type domains span residues R52–E81 and T91–N120. [4Fe-4S] cluster is bound by residues C61, C64, C67, C71, C100, C103, C106, and C110.

This sequence belongs to the complex I 23 kDa subunit family. NDH-1 is composed of 14 different subunits. Subunits NuoA, H, J, K, L, M, N constitute the membrane sector of the complex. The cofactor is [4Fe-4S] cluster.

It is found in the cell membrane. The catalysed reaction is a quinone + NADH + 5 H(+)(in) = a quinol + NAD(+) + 4 H(+)(out). Functionally, NDH-1 shuttles electrons from NADH, via FMN and iron-sulfur (Fe-S) centers, to quinones in the respiratory chain. The immediate electron acceptor for the enzyme in this species is believed to be ubiquinone. Couples the redox reaction to proton translocation (for every two electrons transferred, four hydrogen ions are translocated across the cytoplasmic membrane), and thus conserves the redox energy in a proton gradient. This Wolbachia sp. subsp. Brugia malayi (strain TRS) protein is NADH-quinone oxidoreductase subunit I.